A 692-amino-acid chain; its full sequence is DNA ligase (692 aa).

NAD(+) is bound by residues 40–44 (DAAYD), 89–90 (SL), and glutamate 121. Catalysis depends on lysine 123, which acts as the N6-AMP-lysine intermediate. Arginine 144, glutamate 181, lysine 297, and lysine 321 together coordinate NAD(+). Cysteine 415, cysteine 417, cysteine 439, and cysteine 445 together coordinate Zn(2+). The BRCT domain occupies 614 to 692 (KTDTAVAGKT…EDEWLEMVGS (79 aa)).

This sequence belongs to the NAD-dependent DNA ligase family. LigA subfamily. Mg(2+) is required as a cofactor. Requires Mn(2+) as cofactor.

The catalysed reaction is NAD(+) + (deoxyribonucleotide)n-3'-hydroxyl + 5'-phospho-(deoxyribonucleotide)m = (deoxyribonucleotide)n+m + AMP + beta-nicotinamide D-nucleotide.. DNA ligase that catalyzes the formation of phosphodiester linkages between 5'-phosphoryl and 3'-hydroxyl groups in double-stranded DNA using NAD as a coenzyme and as the energy source for the reaction. It is essential for DNA replication and repair of damaged DNA. The chain is DNA ligase from Phenylobacterium zucineum (strain HLK1).